A 155-amino-acid chain; its full sequence is Zinc finger HIT domain-containing protein 3 (155 aa).

Zn(2+)-binding residues include C11, C14, C22, C25, C30, C34, H38, and C42. Residues 11 to 42 (CVICLEKPKYRCPACRVPYCSVVCFRKHKEQC) form an HIT-type zinc finger. Phosphoserine is present on S80.

As to quaternary structure, thyroid receptor interacting proteins (TRIPs) specifically interact with the ligand binding domain of the thyroid receptor (TR). Requires the presence of thyroid hormone for its interaction. Interacts with NUFIP1. Interacts (via HIT-type zinc finger) with the RUVBL1/RUVBL2 complex in the presence of ADP.

The protein resides in the cytoplasm. It is found in the nucleus. In Homo sapiens (Human), this protein is Zinc finger HIT domain-containing protein 3 (ZNHIT3).